Reading from the N-terminus, the 187-residue chain is Orotate phosphoribosyltransferase (187 aa).

Residues arginine 98, lysine 99, lysine 102, histidine 104, and 128–136 (EDVTTTGGS) each bind 5-phospho-alpha-D-ribose 1-diphosphate. Orotate is bound by residues threonine 132 and arginine 160.

The protein belongs to the purine/pyrimidine phosphoribosyltransferase family. PyrE subfamily. Homodimer. Mg(2+) is required as a cofactor.

It catalyses the reaction orotidine 5'-phosphate + diphosphate = orotate + 5-phospho-alpha-D-ribose 1-diphosphate. It participates in pyrimidine metabolism; UMP biosynthesis via de novo pathway; UMP from orotate: step 1/2. Its function is as follows. Catalyzes the transfer of a ribosyl phosphate group from 5-phosphoribose 1-diphosphate to orotate, leading to the formation of orotidine monophosphate (OMP). The sequence is that of Orotate phosphoribosyltransferase from Rhodopseudomonas palustris (strain BisB5).